We begin with the raw amino-acid sequence, 297 residues long: Syntaxin-4 (297 aa).

A compositionally biased stretch (basic and acidic residues) spans 1–12; sequence MRDRTHELRQGD. Residues 1-21 form a disordered region; it reads MRDRTHELRQGDDSSDEEDKE. Over 1–275 the chain is Cytoplasmic; sequence MRDRTHELRQ…QKKARKKKVL (275 aa). Phosphoserine occurs at positions 14 and 15. Thr31 is subject to Phosphothreonine. Residues Ser36, Ser117, Ser208, and Ser248 each carry the phosphoserine modification. The stretch at 43 to 163 forms a coiled coil; the sequence is HKVRTIRQTI…ERIRRQLKIT (121 aa). Residues 154 to 297 form an interaction with CENPF region; the sequence is ERIRRQLKIT…AVIIGVTVVG (144 aa). Residues 200-262 enclose the t-SNARE coiled-coil homology domain; sequence LNEISARHSE…ERGQEHVKTA (63 aa). Residues 276 to 296 form a helical; Anchor for type IV membrane protein membrane-spanning segment; it reads IAICVSITVVLLAVIIGVTVV. Gly297 is a topological domain (extracellular).

It belongs to the syntaxin family. In terms of assembly, component of the SNARE complex composed of STX4, SNAP23 and VAMP7 that interacts with SYT7 during lysosomal exocytosis. Found in a complex with VAMP8 and SNAP23. Detected in a complex with SNAP23 and STXBP4. Interacts with VAMP2. Interacts with SNAP23 and SNAPIN. Interacts with LLGL1. Interacts (via C-terminus) with CENPF. Interacts with DOC2B. Interacts with STXBP6. Interacts with STXBP3; excludes interaction with DOC2B and SNAP25. Interacts with STXBP4; excludes interaction with VAMP2. Interacts with STXBP5L. As to expression, expressed in neutrophils and neutrophil-differentiated HL-60 cells. Expression in neutrophils increases with differentiation.

The protein resides in the cell membrane. It localises to the cell projection. Its subcellular location is the neuron projection. The protein localises to the stereocilium. In terms of biological role, plasma membrane t-SNARE that mediates docking of transport vesicles. Necessary for the translocation of SLC2A4 from intracellular vesicles to the plasma membrane. In neurons, recruited at neurite tips to membrane domains rich in the phospholipid 1-oleoyl-2-palmitoyl-PC (OPPC) which promotes neurite tip surface expression of the dopamine transporter SLC6A3/DAT by facilitating fusion of SLC6A3-containing transport vesicles with the plasma membrane. Together with STXB3 and VAMP2, may also play a role in docking/fusion of intracellular GLUT4-containing vesicles with the cell surface in adipocytes and in docking of synaptic vesicles at presynaptic active zones. Required for normal hearing. This chain is Syntaxin-4 (STX4), found in Homo sapiens (Human).